Consider the following 480-residue polypeptide: Ochratoxinase (480 aa).

Zn(2+) contacts are provided by His111, His113, Lys246, His287, and His307. The active site involves Lys246. Residue Asp378 is part of the active site.

Belongs to the metallo-dependent hydrolases superfamily. Ochratoxinase amidase 2 family. In terms of assembly, homooctamer. The cofactor is Zn(2+).

The protein localises to the secreted. The catalysed reaction is ochratoxin A + H2O = ochratoxin alpha + L-phenylalanine. The Zn(2+)-specific chelator 1,10-phenanthroline inhibits the enzyme activity. In terms of biological role, carboxypeptidase that catalyzes the release of a C-terminal amino acid with specific catalytic activity for aromatic amino acids such as phenylalanine. Is able to degrade ochratoxin A, one of the five major mycotoxins most harmful to humans and animals that is produced by Aspergillus and Penicillium species and occurs in a wide range of agricultural products. The sequence is that of Ochratoxinase from Aspergillus niger (strain ATCC 1015 / CBS 113.46 / FGSC A1144 / LSHB Ac4 / NCTC 3858a / NRRL 328 / USDA 3528.7).